The chain runs to 192 residues: UPF0312 protein YPK_1931 (192 aa).

The first 23 residues, 1–23, serve as a signal peptide directing secretion; that stretch reads MINKTLLGLSLGALMFTAGSAVA.

It belongs to the UPF0312 family. Type 1 subfamily.

The protein localises to the periplasm. The polypeptide is UPF0312 protein YPK_1931 (Yersinia pseudotuberculosis serotype O:3 (strain YPIII)).